A 661-amino-acid chain; its full sequence is UvrABC system protein B (661 aa).

Positions 25–182 constitute a Helicase ATP-binding domain; it reads KGLNNKKRSQ…NDLVNLQYER (158 aa). 38–45 serves as a coordination point for ATP; sequence GITGSGKT. The short motif at 91 to 114 is the Beta-hairpin element; sequence YYDYYQPEAYIPKTDVFIEKDSSI. Positions 430–592 constitute a Helicase C-terminal domain; that stretch reads QVEDLVGEIQ…IIPKTINRTI (163 aa). The UVR domain maps to 621–656; that stretch reads KAHIDKLRKEMLKAASNLEFEQAAKLRDQLKTLEEA.

It belongs to the UvrB family. Forms a heterotetramer with UvrA during the search for lesions. Interacts with UvrC in an incision complex.

Its subcellular location is the cytoplasm. Its function is as follows. The UvrABC repair system catalyzes the recognition and processing of DNA lesions. A damage recognition complex composed of 2 UvrA and 2 UvrB subunits scans DNA for abnormalities. Upon binding of the UvrA(2)B(2) complex to a putative damaged site, the DNA wraps around one UvrB monomer. DNA wrap is dependent on ATP binding by UvrB and probably causes local melting of the DNA helix, facilitating insertion of UvrB beta-hairpin between the DNA strands. Then UvrB probes one DNA strand for the presence of a lesion. If a lesion is found the UvrA subunits dissociate and the UvrB-DNA preincision complex is formed. This complex is subsequently bound by UvrC and the second UvrB is released. If no lesion is found, the DNA wraps around the other UvrB subunit that will check the other stand for damage. This Rickettsia bellii (strain OSU 85-389) protein is UvrABC system protein B.